Here is a 281-residue protein sequence, read N- to C-terminus: CMT1A duplicated region transcript 15 protein-like protein (281 aa).

2 disordered regions span residues 107–131 (KPAWEEPPPERALEVEGAPAKDQPS) and 150–187 (AENVAGERSGREGVTSTAPASRSHAAPSPGHGGKHGGG). Residues 108 to 120 (PAWEEPPPERALE) are compositionally biased toward basic and acidic residues. The span at 165 to 178 (STAPASRSHAAPSP) shows a compositional bias: low complexity. The helical transmembrane segment at 207–227 (AGTTALLLQGLFIVLILVGYI) threads the bilayer.

It localises to the membrane. The sequence is that of CMT1A duplicated region transcript 15 protein-like protein (CDRT15L2) from Homo sapiens (Human).